Reading from the N-terminus, the 268-residue chain is WUSCHEL-related homeobox 11 (268 aa).

The interval 1-35 (MDQEQTPHSPTRHSRSPPSSASGSTSAEPVRSRWS) is disordered. Residues 16–27 (SPPSSASGSTSA) show a composition bias toward low complexity. The segment at residues 29–93 (PVRSRWSPKP…NRRSRSRRRQ (65 aa)) is a DNA-binding region (homeobox; WUS-type).

The protein belongs to the WUS homeobox family.

The protein localises to the nucleus. Its function is as follows. Transcription factor which may be involved in developmental processes. In Arabidopsis thaliana (Mouse-ear cress), this protein is WUSCHEL-related homeobox 11 (WOX11).